The sequence spans 408 residues: Aminoacylase-1A (408 aa).

Histidine 80 provides a ligand contact to Zn(2+). The active site involves aspartate 82. Residue aspartate 113 coordinates Zn(2+). The Proton acceptor role is filled by glutamate 147. The Zn(2+) site is built by glutamate 148, glutamate 175, and histidine 373. A Phosphoserine modification is found at serine 408.

Belongs to the peptidase M20A family. In terms of assembly, homodimer. The cofactor is Zn(2+). The N-terminus is blocked.

Its subcellular location is the cytoplasm. The enzyme catalyses an N-acyl-L-amino acid + H2O = an L-alpha-amino acid + a carboxylate. The catalysed reaction is an N-acetyl-L-cysteine-S-conjugate + H2O = an S-substituted L-cysteine + acetate. Its function is as follows. Involved in the hydrolysis of N-acylated or N-acetylated amino acids (except L-aspartate). The chain is Aminoacylase-1A (Acy1a) from Rattus norvegicus (Rat).